Here is a 576-residue protein sequence, read N- to C-terminus: TOX high mobility group box family member 3 (576 aa).

Disordered regions lie at residues 189-258 (NLGG…PQKP), 422-443 (TMVG…QHQM), and 519-563 (LQHM…QIQS). Positions 204–215 (ASKSATPSPSSS) are enriched in low complexity. Positions 223–239 (EANRAIGEKRAAPDSGK) are enriched in basic and acidic residues. Residues 240 to 250 (KPKTPKKKKKK) show a composition bias toward basic residues. Residues 255–323 (PQKPVSAYAL…EYLKALAAYR (69 aa)) constitute a DNA-binding region (HMG box). A compositionally biased stretch (low complexity) spans 428 to 443 (PSTQVSPSVQTQQHQM). The segment covering 528-542 (PSPRQHSPVASQITS) has biased composition (polar residues). The span at 549–563 (SPQPASQQHQSQIQS) shows a compositional bias: low complexity.

In terms of assembly, homodimer. Interacts with CREB1; the interaction is not depolarization dependent. Interacts with CREBBP (via C-terminus). Interacts (via HGM box) with CITED1 (via C-terminus); the interaction increases estrogen-response element (ERE)-dependent transcription and protection against cell death. Interacts with CREB1 (phosphorylated form). In terms of tissue distribution, expressed mainly in epithelial cells. Expressed in the central nervous system (CNS), in the ileum and within the brain in the frontal and occipital lobe.

It is found in the nucleus. Transcriptional coactivator of the p300/CBP-mediated transcription complex. Activates transactivation through cAMP response element (CRE) sites. Protects against cell death by inducing antiapoptotic and repressing pro-apoptotic transcripts. Stimulates transcription from the estrogen-responsive or BCL-2 promoters. Required for depolarization-induced transcription activation of the C-FOS promoter in neurons. Associates with chromatin to the estrogen-responsive C3 promoter region. This is TOX high mobility group box family member 3 (TOX3) from Homo sapiens (Human).